Consider the following 545-residue polypeptide: CTP synthase (545 aa).

Residues Met1–Leu266 are amidoligase domain. Residue Ser14 coordinates CTP. Ser14 is a UTP binding site. Residues Ser15 to Ile20 and Asp72 each bind ATP. Mg(2+)-binding residues include Asp72 and Glu140. CTP is bound by residues Asp147–Glu149, Lys187–Gln192, and Lys223. UTP-binding positions include Lys187–Gln192 and Lys223. Lys239–Val241 serves as a coordination point for ATP. Residues Thr291–Arg542 enclose the Glutamine amidotransferase type-1 domain. Gly352 contacts L-glutamine. The active-site Nucleophile; for glutamine hydrolysis is the Cys379. L-glutamine-binding positions include Leu380 to Gln383, Glu403, and Arg470. Catalysis depends on residues His515 and Glu517.

Belongs to the CTP synthase family. Homotetramer.

The enzyme catalyses UTP + L-glutamine + ATP + H2O = CTP + L-glutamate + ADP + phosphate + 2 H(+). It carries out the reaction L-glutamine + H2O = L-glutamate + NH4(+). It catalyses the reaction UTP + NH4(+) + ATP = CTP + ADP + phosphate + 2 H(+). Its pathway is pyrimidine metabolism; CTP biosynthesis via de novo pathway; CTP from UDP: step 2/2. With respect to regulation, allosterically activated by GTP, when glutamine is the substrate; GTP has no effect on the reaction when ammonia is the substrate. The allosteric effector GTP functions by stabilizing the protein conformation that binds the tetrahedral intermediate(s) formed during glutamine hydrolysis. Inhibited by the product CTP, via allosteric rather than competitive inhibition. Its function is as follows. Catalyzes the ATP-dependent amination of UTP to CTP with either L-glutamine or ammonia as the source of nitrogen. Regulates intracellular CTP levels through interactions with the four ribonucleotide triphosphates. The protein is CTP synthase of Klebsiella pneumoniae (strain 342).